The sequence spans 4540 residues: Dynein heavy chain, cytoplasmic (4540 aa).

The segment at 1 to 1796 is stem; it reads MEESETQLNV…LIQMGNAQFH (1796 aa). Coiled coils occupy residues 440–482, 698–722, 794–827, 975–995, 1169–1251, and 1295–1311; these read EHIK…NVQQ, RVNY…KTKV, VKKF…AMKT, QQLI…MEQY, RSKK…LKMD, and QNKK…KQLN. AAA regions lie at residues 1797 to 2018, 2091 to 2348, 2457 to 2705, and 2796 to 3056; these read YGFE…VLNS, KELA…FTRI, EIDP…WKYA, and QFNE…AKRF. ATP-binding positions include 1835-1842, 2129-2136, 2496-2503, and 2834-2841; these read GPAGTGKT, GPCGCGKS, GPPGSGKT, and GSSGVGKT. Coiled-coil stretches lie at residues 3076 to 3182, 3289 to 3367, 3653 to 3688, and 3820 to 3851; these read NEKK…NAKQ, QLKY…RSQA, EDEK…VMNT, and QQLK…RWLN. A stalk region spans residues 3076-3367; sequence NEKKSQLEDQ…VQEKVTRSQA (292 aa). The disordered stretch occupies residues 3140–3159; that stretch reads KKKEDSTRLSSDAEKKAKEM. Positions 3444-3673 are AAA 5; that stretch reads LSRPSDRLNW…LKKEAAVIVQ (230 aa). The tract at residues 3908–4123 is AAA 6; the sequence is ARKLINQILG…QRCSLDLIDE (216 aa). Coiled coils occupy residues 4238–4259 and 4313–4342; these read QKLI…TQIE and RFLD…LAQG.

The protein belongs to the dynein heavy chain family. As to quaternary structure, consists of at least two heavy chains and a number of intermediate and light chains.

Its subcellular location is the cytoplasm. The protein resides in the cytoskeleton. Functionally, cytoplasmic dynein acts as a motor for the intracellular retrograde motility of vesicles and organelles along microtubules. Dynein has ATPase activity; the force-producing power stroke is thought to occur on release of ADP. This chain is Dynein heavy chain, cytoplasmic (DHC-8), found in Paramecium tetraurelia.